The following is a 67-amino-acid chain: Large ribosomal subunit protein uL29 (67 aa).

It belongs to the universal ribosomal protein uL29 family.

The protein is Large ribosomal subunit protein uL29 of Halorhodospira halophila (strain DSM 244 / SL1) (Ectothiorhodospira halophila (strain DSM 244 / SL1)).